Here is a 1369-residue protein sequence, read N- to C-terminus: Rho-associated protein kinase 1 (1369 aa).

N-acetylserine is present on S2. The Protein kinase domain maps to 76–338; sequence YEVVKVIGRG…VEEIKRHLFF (263 aa). Residues 82 to 90 and K105 each bind ATP; that span reads IGRGAFGEV. D198 serves as the catalytic Proton acceptor. The AGC-kinase C-terminal domain occupies 341–409; it reads DQWAWETLRD…YSNRRYLPSA (69 aa). The segment at 368–727 is interaction with FHOD1; it reads FDDLEEDKGD…KKLKEEREAR (360 aa). Residues 422–692 are a coiled coil; that stretch reads KNVQESLQKT…RLEQEVNEHK (271 aa). The region spanning 479–556 is the REM-1 domain; that stretch reads SAVSQIEKEK…LEEANDLLRT (78 aa). Residues 707 to 946 are SHROOM3 binding; the sequence is EAKSVAMCEM…TVSRLEEANN (240 aa). One can recognise a RhoBD domain in the interval 949 to 1015; the sequence is TKDIELLRKE…LAEIMNRKDF (67 aa). The interval 998-1010 is RHOA binding; sequence LKTQAVNKLAEIM. The stretch at 1011 to 1102 forms a coiled coil; sequence NRKDFKIDRK…KLLDLSDSTS (92 aa). S1105 and S1108 each carry phosphoserine. An auto-inhibitory region spans residues 1115 to 1369; sequence NLPVGSACIP…VVKNTSGKTS (255 aa). Positions 1133–1332 constitute a PH domain; it reads SSRIEGWLSV…WVTHLVKKIP (200 aa). The segment at 1243–1298 adopts a Phorbol-ester/DAG-type zinc-finger fold; it reads GHEFIPTLYHFPANCEACAKPLWHVFKPPPALECRRCHVKSHRDHLDKKEDLIPPC. At S1343 the chain carries Phosphoserine.

This sequence belongs to the protein kinase superfamily. AGC Ser/Thr protein kinase family. Homodimer. Interacts with GEM, MYLC2B, RHOE, LIMK1, LIMK2, TSG101, CHORDC1, DAPK3, PFN1, PTEN and JIP3. Interacts with FHOD1 in a Src-dependent manner. Interacts with ITGB1BP1 (via N-terminus and PTB domain). Interacts with RHOA (activated by GTP), RHOB, RHOC and PPP1R12A. Interacts with SHROOM3. It depends on Mg(2+) as a cofactor. Autophosphorylated on serine and threonine residues. Post-translationally, cleaved by caspase-3 during apoptosis. This leads to constitutive activation of the kinase and membrane blebbing. As to expression, highly expressed in brain, spleen, lung, liver, skeletal muscle, kidney and testis.

The protein resides in the cytoplasm. Its subcellular location is the cytoskeleton. It localises to the microtubule organizing center. It is found in the centrosome. The protein localises to the centriole. The protein resides in the golgi apparatus membrane. Its subcellular location is the cell projection. It localises to the bleb. It is found in the cell membrane. The protein localises to the lamellipodium. The protein resides in the ruffle. The catalysed reaction is L-seryl-[protein] + ATP = O-phospho-L-seryl-[protein] + ADP + H(+). It catalyses the reaction L-threonyl-[protein] + ATP = O-phospho-L-threonyl-[protein] + ADP + H(+). Activated by RHOA binding. Inhibited by Y-27632. Its function is as follows. Protein kinase which is a key regulator of the actin cytoskeleton and cell polarity. Involved in regulation of smooth muscle contraction, actin cytoskeleton organization, stress fiber and focal adhesion formation, neurite retraction, cell adhesion and motility via phosphorylation of DAPK3, GFAP, LIMK1, LIMK2, MYL9/MLC2, TPPP, PFN1 and PPP1R12A. Phosphorylates FHOD1 and acts synergistically with it to promote SRC-dependent non-apoptotic plasma membrane blebbing. Phosphorylates JIP3 and regulates the recruitment of JNK to JIP3 upon UVB-induced stress. Acts as a suppressor of inflammatory cell migration by regulating PTEN phosphorylation and stability. Acts as a negative regulator of VEGF-induced angiogenic endothelial cell activation. Required for centrosome positioning and centrosome-dependent exit from mitosis. Plays a role in terminal erythroid differentiation. Inhibits podocyte motility via regulation of actin cytoskeletal dynamics and phosphorylation of CFL1. Promotes keratinocyte terminal differentiation. Involved in osteoblast compaction through the fibronectin fibrillogenesis cell-mediated matrix assembly process, essential for osteoblast mineralization. May regulate closure of the eyelids and ventral body wall by inducing the assembly of actomyosin bundles. In Rattus norvegicus (Rat), this protein is Rho-associated protein kinase 1 (Rock1).